We begin with the raw amino-acid sequence, 193 residues long: Proteasome subunit beta 1 (193 aa).

Residues 1 to 4 constitute a propeptide, removed in mature form; by autocatalysis; that stretch reads MPGA. Residue T5 is the Nucleophile of the active site.

The protein belongs to the peptidase T1B family. The 20S proteasome core is composed of 14 alpha and 14 beta subunits that assemble into four stacked heptameric rings, resulting in a barrel-shaped structure. The two inner rings, each composed of seven catalytic beta subunits, are sandwiched by two outer rings, each composed of seven alpha subunits. The catalytic chamber with the active sites is on the inside of the barrel. Has a gated structure, the ends of the cylinder being occluded by the N-termini of the alpha-subunits. Is capped at one or both ends by the proteasome regulatory ATPase, PAN.

The protein resides in the cytoplasm. It catalyses the reaction Cleavage of peptide bonds with very broad specificity.. Its activity is regulated as follows. The formation of the proteasomal ATPase PAN-20S proteasome complex, via the docking of the C-termini of PAN into the intersubunit pockets in the alpha-rings, triggers opening of the gate for substrate entry. Interconversion between the open-gate and close-gate conformations leads to a dynamic regulation of the 20S proteasome proteolysis activity. In terms of biological role, component of the proteasome core, a large protease complex with broad specificity involved in protein degradation. This chain is Proteasome subunit beta 1, found in Cenarchaeum symbiosum (strain A).